We begin with the raw amino-acid sequence, 201 residues long: Prostamide/prostaglandin F synthase (201 aa).

Position 108 is a phosphotyrosine (Y108).

Belongs to the peroxiredoxin-like PRXL2 family. Prostamide/prostaglandin F synthase subfamily.

The protein localises to the cytoplasm. It localises to the cytosol. The enzyme catalyses prostaglandin H2 + [thioredoxin]-dithiol = prostaglandin F2alpha + [thioredoxin]-disulfide. The catalysed reaction is prostamide F2alpha + [thioredoxin]-disulfide = prostamide H2 + [thioredoxin]-dithiol. Functionally, catalyzes the reduction of prostaglandin-ethanolamide H(2) (prostamide H(2)) to prostamide F(2alpha) with NADPH as proton donor. Also able to reduce prostaglandin H(2) to prostaglandin F(2alpha). This Bos taurus (Bovine) protein is Prostamide/prostaglandin F synthase (PRXL2B).